The sequence spans 307 residues: Glycine--tRNA ligase alpha subunit (307 aa).

This sequence belongs to the class-II aminoacyl-tRNA synthetase family. Tetramer of two alpha and two beta subunits.

The protein resides in the cytoplasm. It carries out the reaction tRNA(Gly) + glycine + ATP = glycyl-tRNA(Gly) + AMP + diphosphate. This Aeromonas hydrophila subsp. hydrophila (strain ATCC 7966 / DSM 30187 / BCRC 13018 / CCUG 14551 / JCM 1027 / KCTC 2358 / NCIMB 9240 / NCTC 8049) protein is Glycine--tRNA ligase alpha subunit.